Reading from the N-terminus, the 182-residue chain is tRNA-splicing endonuclease (182 aa).

Residues Tyr-119, His-127, and Lys-158 contribute to the active site.

It belongs to the tRNA-intron endonuclease family. Archaeal short subfamily. As to quaternary structure, homotetramer; although the tetramer contains four active sites, only two participate in the cleavage. Therefore, it should be considered as a dimer of dimers.

It carries out the reaction pretRNA = a 3'-half-tRNA molecule with a 5'-OH end + a 5'-half-tRNA molecule with a 2',3'-cyclic phosphate end + an intron with a 2',3'-cyclic phosphate and a 5'-hydroxyl terminus.. Endonuclease that removes tRNA introns. Cleaves pre-tRNA at the 5'- and 3'-splice sites to release the intron. The products are an intron and two tRNA half-molecules bearing 2',3' cyclic phosphate and 5'-OH termini. Recognizes a pseudosymmetric substrate in which 2 bulged loops of 3 bases are separated by a stem of 4 bp. This chain is tRNA-splicing endonuclease, found in Saccharolobus solfataricus (strain ATCC 35092 / DSM 1617 / JCM 11322 / P2) (Sulfolobus solfataricus).